A 51-amino-acid chain; its full sequence is Lantibiotic streptococcin A-M49 (51 aa).

Positions 1-25 (MTKEHEIINSIQEVSLEELDQIIGA) are excised as a propeptide. Cross-links (beta-methyllanthionine (Thr-Cys)) lie at residues 33–38 (TISHEC) and 42–50 (TWAFLATCC). Residues 35-49 (SHECHLNTWAFLATC) constitute a cross-link (lanthionine (Ser-Cys)). The residue at position 48 (Thr-48) is a 2,3-didehydrobutyrine.

The protein belongs to the type A lantibiotic family. In terms of processing, maturation of lantibiotics involves the enzymatic conversion of Thr, and Ser into dehydrated AA and the formation of thioether bonds with cysteine. This is followed by membrane translocation and cleavage of the modified precursor.

It is found in the secreted. Its subcellular location is the cell surface. In terms of biological role, lanthionine-containing peptide antibiotic (lantibiotic) active on certain Gram-positive bacteria. The bactericidal activity of lantibiotics is based on depolarization of energized bacterial cytoplasmic membranes, initiated by the formation of aqueous transmembrane pores. In Streptococcus pyogenes serotype M49, this protein is Lantibiotic streptococcin A-M49 (scnA').